The chain runs to 324 residues: Fructose-1,6-bisphosphatase class 1 (324 aa).

Mg(2+)-binding residues include E88, D107, L109, and D110. Substrate contacts are provided by residues D110–S113, N199, and K265. E271 is a binding site for Mg(2+).

It belongs to the FBPase class 1 family. Homotetramer. Requires Mg(2+) as cofactor.

The protein resides in the cytoplasm. It carries out the reaction beta-D-fructose 1,6-bisphosphate + H2O = beta-D-fructose 6-phosphate + phosphate. The protein operates within carbohydrate biosynthesis; gluconeogenesis. This Neisseria meningitidis serogroup C (strain 053442) protein is Fructose-1,6-bisphosphatase class 1.